We begin with the raw amino-acid sequence, 218 residues long: Probable transaldolase (218 aa).

Catalysis depends on Lys84, which acts as the Schiff-base intermediate with substrate.

Belongs to the transaldolase family. Type 3B subfamily.

It localises to the cytoplasm. The catalysed reaction is D-sedoheptulose 7-phosphate + D-glyceraldehyde 3-phosphate = D-erythrose 4-phosphate + beta-D-fructose 6-phosphate. It functions in the pathway carbohydrate degradation; pentose phosphate pathway; D-glyceraldehyde 3-phosphate and beta-D-fructose 6-phosphate from D-ribose 5-phosphate and D-xylulose 5-phosphate (non-oxidative stage): step 2/3. Its function is as follows. Transaldolase is important for the balance of metabolites in the pentose-phosphate pathway. This is Probable transaldolase from Sulfurihydrogenibium sp. (strain YO3AOP1).